Here is a 977-residue protein sequence, read N- to C-terminus: Macrophage colony-stimulating factor 1 receptor (977 aa).

Residues 1–18 (MFFALLFLIGILLGQVQG) form the signal peptide. Over 19 to 519 (WSEPRIRLSS…MEVSDQIFTS (501 aa)) the chain is Extracellular. Ig-like C2-type domains are found at residues 22 to 109 (PRIR…VHVF), 120 to 198 (PSTS…EKVS), 213 to 305 (PYVY…TQLL), 316 to 407 (PKLS…ASIT), and 408 to 513 (FDIK…MEVS). A disulfide bridge connects residues cysteine 48 and cysteine 92. 10 N-linked (GlcNAc...) asparagine glycosylation sites follow: asparagine 98, asparagine 101, asparagine 154, asparagine 163, asparagine 244, asparagine 286, asparagine 298, asparagine 361, asparagine 424, and asparagine 455. 2 cysteine pairs are disulfide-bonded: cysteine 138–cysteine 187 and cysteine 234–cysteine 289. Cysteine 430 and cysteine 495 are oxidised to a cystine. A helical membrane pass occupies residues 520 to 540 (AMCGSTVAMVVLGLLLIFMIY). At 541-977 (KYKQKPRYEI…LMKPNNYQFC (437 aa)) the chain is on the cytoplasmic side. Residues 544–576 (QKPRYEIRWKIIEATNGNNYTFIDPTQLPYNEK) are regulatory juxtamembrane domain. Tyrosine 563 bears the Phosphotyrosine; by autocatalysis mark. The 334-residue stretch at 584–917 (LKLGKTLGAG…KISQMIQRML (334 aa)) folds into the Protein kinase domain. Residues 590–598 (LGAGAFGKV) and lysine 618 contribute to the ATP site. 2 positions are modified to phosphotyrosine; by autocatalysis: tyrosine 701 and tyrosine 725. Aspartate 781 functions as the Proton acceptor in the catalytic mechanism. The activation loop stretch occupies residues 799 to 821 (DFGLARDIMNDSNYVVKGNARLP). Residues tyrosine 812 and tyrosine 929 each carry the phosphotyrosine; by autocatalysis modification. A disordered region spans residues 919-977 (ETSEQQDTQEYKNIPTEAEAEQQLESCDPVKHEDESFETSCDQEEEDQPLMKPNNYQFC). Over residues 953–966 (ESFETSCDQEEEDQ) the composition is skewed to acidic residues. Tyrosine 974 carries the post-translational modification Phosphotyrosine; by autocatalysis.

It belongs to the protein kinase superfamily. Tyr protein kinase family. CSF-1/PDGF receptor subfamily. Monomer. Homodimer. Interacts with CSF1. Post-translationally, autophosphorylated in response to CSF1 binding. autophosphorylation, leading to its degradation. In terms of processing, ubiquitinated. Becomes rapidly polyubiquitinated after autophosphorylation, leading to its degradation.

It is found in the cell membrane. The catalysed reaction is L-tyrosyl-[protein] + ATP = O-phospho-L-tyrosyl-[protein] + ADP + H(+). Present in an inactive conformation in the absence of bound ligand. CSF1 binding leads to dimerization and activation by autophosphorylation on tyrosine residues. Functionally, tyrosine-protein kinase that acts as a cell-surface receptor for CSF1 and plays an essential role in the regulation of survival, proliferation and differentiation of hematopoietic precursor cells, especially mononuclear phagocytes, such as macrophages and monocytes. Plays an important role in innate immunity and in inflammatory processes. Plays an important role in the regulation of osteoclast proliferation and differentiation, the regulation of bone resorption, and is required for normal bone development. Promotes reorganization of the actin cytoskeleton, regulates formation of membrane ruffles, cell adhesion and cell migration. Activates several signaling pathways in response to ligand binding. The protein is Macrophage colony-stimulating factor 1 receptor (csf1r) of Danio rerio (Zebrafish).